Reading from the N-terminus, the 233-residue chain is Metallo-beta-lactamase domain-containing protein 1 (233 aa).

The Zn(2+) site is built by histidine 96, histidine 98, aspartate 100, histidine 101, histidine 152, aspartate 174, and histidine 213.

It belongs to the metallo-beta-lactamase superfamily. Glyoxalase II family. Homodimer. It depends on Zn(2+) as a cofactor.

It is found in the cytoplasm. The protein localises to the cytosol. The protein resides in the nucleus. It carries out the reaction a ribonucleotidyl-ribonucleotide-RNA + H2O = a 3'-end ribonucleotide-RNA + a 5'-end 5'-phospho-ribonucleoside-RNA + H(+). Its function is as follows. Endoribonuclease that catalyzes the hydrolysis of histone-coding pre-mRNA 3'-end. Involved in histone pre-mRNA processing during the S-phase of the cell cycle, which is required for entering/progressing through S-phase. Cleaves histone pre-mRNA at a major and a minor cleavage site after the 5'-ACCCA-3' and the 5'-ACCCACA-3' sequence, respectively, and located downstream of the stem-loop. May require the presence of the HDE element located at the histone pre-RNA 3'-end to avoid non-specific cleavage. This Xenopus laevis (African clawed frog) protein is Metallo-beta-lactamase domain-containing protein 1 (mblac1).